Reading from the N-terminus, the 61-residue chain is UPF0391 membrane protein Bpro_0066 (61 aa).

The next 2 helical transmembrane spans lie at 5-25 and 33-53; these read AIIF…GVAA and ILFG…ALGV.

It belongs to the UPF0391 family.

It is found in the cell membrane. This is UPF0391 membrane protein Bpro_0066 from Polaromonas sp. (strain JS666 / ATCC BAA-500).